The primary structure comprises 486 residues: Cardiolipin synthase A (486 aa).

Transmembrane regions (helical) follow at residues 3–23 and 38–58; these read TFYT…IAGV and MAWL…YLSV. PLD phosphodiesterase domains lie at 219-246 and 399-426; these read MDLR…VDPR and EGGL…DMRS. Active-site residues include His-224, Lys-226, Asp-231, His-404, Lys-406, and Asp-411.

The protein belongs to the phospholipase D family. Cardiolipin synthase subfamily. ClsA sub-subfamily.

The protein resides in the cell inner membrane. The enzyme catalyses 2 a 1,2-diacyl-sn-glycero-3-phospho-(1'-sn-glycerol) = a cardiolipin + glycerol. In terms of biological role, catalyzes the reversible phosphatidyl group transfer from one phosphatidylglycerol molecule to another to form cardiolipin (CL) (diphosphatidylglycerol) and glycerol. This chain is Cardiolipin synthase A, found in Cronobacter sakazakii (strain ATCC BAA-894) (Enterobacter sakazakii).